Consider the following 365-residue polypeptide: ASTRA-associated protein 1 (365 aa).

6 WD repeats span residues 12–50 (GHLS…PTHI), 53–91 (AHTK…GGSH), 188–230 (EKTG…QKVN), 245–284 (VHKE…ETHT), 292–330 (GHPG…KLAV), and 333–365 (YHSE…WQIY).

Belongs to the WD repeat ASA1 family. Component of the ASTRA chromatin remodeling machinery complex.

The protein resides in the nucleus. Its function is as follows. Component of the ASTRA complex involved in chromatin remodeling. The protein is ASTRA-associated protein 1 (asa1) of Schizosaccharomyces japonicus (strain yFS275 / FY16936) (Fission yeast).